Here is a 336-residue protein sequence, read N- to C-terminus: Phosphate acyltransferase (336 aa).

This sequence belongs to the PlsX family. As to quaternary structure, homodimer. Probably interacts with PlsY.

The protein resides in the cytoplasm. The enzyme catalyses a fatty acyl-[ACP] + phosphate = an acyl phosphate + holo-[ACP]. Its pathway is lipid metabolism; phospholipid metabolism. In terms of biological role, catalyzes the reversible formation of acyl-phosphate (acyl-PO(4)) from acyl-[acyl-carrier-protein] (acyl-ACP). This enzyme utilizes acyl-ACP as fatty acyl donor, but not acyl-CoA. The polypeptide is Phosphate acyltransferase (Dictyoglomus turgidum (strain DSM 6724 / Z-1310)).